We begin with the raw amino-acid sequence, 431 residues long: Trigger factor (431 aa).

In terms of domain architecture, PPIase FKBP-type spans 158 to 243; that stretch reads GDLVAVETWS…VAEVSEPVVP (86 aa).

It belongs to the FKBP-type PPIase family. Tig subfamily.

Its subcellular location is the cytoplasm. It carries out the reaction [protein]-peptidylproline (omega=180) = [protein]-peptidylproline (omega=0). Functionally, involved in protein export. Acts as a chaperone by maintaining the newly synthesized protein in an open conformation. Functions as a peptidyl-prolyl cis-trans isomerase. The chain is Trigger factor from Stenotrophomonas maltophilia (strain R551-3).